A 264-amino-acid chain; its full sequence is Thiazole synthase (264 aa).

Lysine 106 (schiff-base intermediate with DXP) is an active-site residue. 1-deoxy-D-xylulose 5-phosphate is bound by residues glycine 167, 193-194 (AG), and 215-216 (NS).

The protein belongs to the ThiG family. In terms of assembly, homotetramer. Forms heterodimers with either ThiH or ThiS.

The protein localises to the cytoplasm. The catalysed reaction is [ThiS sulfur-carrier protein]-C-terminal-Gly-aminoethanethioate + 2-iminoacetate + 1-deoxy-D-xylulose 5-phosphate = [ThiS sulfur-carrier protein]-C-terminal Gly-Gly + 2-[(2R,5Z)-2-carboxy-4-methylthiazol-5(2H)-ylidene]ethyl phosphate + 2 H2O + H(+). The protein operates within cofactor biosynthesis; thiamine diphosphate biosynthesis. In terms of biological role, catalyzes the rearrangement of 1-deoxy-D-xylulose 5-phosphate (DXP) to produce the thiazole phosphate moiety of thiamine. Sulfur is provided by the thiocarboxylate moiety of the carrier protein ThiS. In vitro, sulfur can be provided by H(2)S. This is Thiazole synthase from Pseudomonas fluorescens (strain SBW25).